The primary structure comprises 653 residues: Calpain-10 (653 aa).

The region spanning 13 to 321 is the Calpain catalytic domain; the sequence is LFRDAAFPAA…FDEITIGYPI (309 aa). Active-site residues include Cys73, His238, and Asn263. 2 domain III regions span residues 322–494 and 513–653; these read TEAG…VSLS and EWGT…PSWQ.

This sequence belongs to the peptidase C2 family.

Its function is as follows. Calcium-regulated non-lysosomal thiol-protease which catalyzes limited proteolysis of substrates involved in cytoskeletal remodeling and signal transduction. May play a role in insulin-stimulated glucose uptake. The polypeptide is Calpain-10 (CAPN10) (Macaca fascicularis (Crab-eating macaque)).